The following is a 325-amino-acid chain: Tetraacyldisaccharide 4'-kinase (325 aa).

58–65 (TVGGSGKT) is a binding site for ATP.

The protein belongs to the LpxK family.

It carries out the reaction a lipid A disaccharide + ATP = a lipid IVA + ADP + H(+). It participates in glycolipid biosynthesis; lipid IV(A) biosynthesis; lipid IV(A) from (3R)-3-hydroxytetradecanoyl-[acyl-carrier-protein] and UDP-N-acetyl-alpha-D-glucosamine: step 6/6. Its function is as follows. Transfers the gamma-phosphate of ATP to the 4'-position of a tetraacyldisaccharide 1-phosphate intermediate (termed DS-1-P) to form tetraacyldisaccharide 1,4'-bis-phosphate (lipid IVA). The chain is Tetraacyldisaccharide 4'-kinase from Coxiella burnetii (strain CbuG_Q212) (Coxiella burnetii (strain Q212)).